The sequence spans 662 residues: Transcription activator of gluconeogenesis NECHADRAFT_59099 (662 aa).

The disordered stretch occupies residues 1–61 (MPHEMEENGA…KDPLRPRRKK (61 aa)). Basic and acidic residues-rich tracts occupy residues 25–34 (TFLKDDEKMT) and 43–56 (TEVK…DPLR). Positions 66–94 (CFACQRAHLTCGDERPCQRCIKRGLADAC) form a DNA-binding region, zn(2)-C6 fungal-type. Disordered stretches follow at residues 105 to 149 (LHDA…TGSN), 502 to 524 (YSGR…MTTP), and 580 to 606 (YRAP…SSRV). Polar residues-rich tracts occupy residues 121 to 130 (YNPTPTPSRT) and 137 to 149 (SSQS…TGSN). A PAS domain is found at 448-519 (TLVEYDDFLQ…TNTPDHNSQG (72 aa)). Residues 582–593 (APQDPDQKEPGS) show a composition bias toward basic and acidic residues.

This sequence belongs to the ERT1/acuK family.

It localises to the nucleus. Functionally, transcription factor which regulates nonfermentable carbon utilization. Activator of gluconeogenetic genes. This is Transcription activator of gluconeogenesis NECHADRAFT_59099 from Fusarium vanettenii (strain ATCC MYA-4622 / CBS 123669 / FGSC 9596 / NRRL 45880 / 77-13-4) (Fusarium solani subsp. pisi).